A 306-amino-acid chain; its full sequence is Golgi to ER traffic protein 2 (306 aa).

Residues 1–18 (MSEISDAEKRRILREKRQ) show a composition bias toward basic and acidic residues. The segment at 1-100 (MSEISDAEKR…PPGSAEQQNG (100 aa)) is disordered. Topologically, residues 1–172 (MSEISDAEKR…VEAHNIAVNK (172 aa)) are cytoplasmic. Residues 34–57 (TGQTENSFLSTESPLDSRESTYPA) are compositionally biased toward polar residues. Residues 68-77 (DSTKQMDELL) are compositionally biased toward basic and acidic residues. Low complexity predominate over residues 78 to 90 (AKATSKTTSKASS). Residues 91-100 (PPGSAEQQNG) are compositionally biased toward polar residues. Residues 173-193 (LKSYTILVKWLFFLLPYLYYI) form a helical membrane-spanning segment. The Lumenal portion of the chain corresponds to 194-214 (THSARDPFQHNAVNYVLDRSN). The chain crosses the membrane as a helical span at residues 215–234 (FFTVFTTFEIVALSVYYQLL). Residues 235–281 (MSAEKSHNVNTLDNNSKILKLVSMVPPGLVPIPNLRGKVAQALQYWD) lie on the Cytoplasmic side of the membrane. The chain crosses the membrane as a helical span at residues 282–302 (VVSMYLTDLCFAIVLAGLFQY). The Lumenal portion of the chain corresponds to 303-306 (YHSM).

It belongs to the GET2 family. Component of the Golgi to ER traffic (GET) complex, which is composed of GET1, GET2 and GET3. Within the complex, GET1 and GET2 form a heterotetramer which is stabilized by phosphatidylinositol binding and which binds to the GET3 homodimer.

Its subcellular location is the endoplasmic reticulum membrane. The protein localises to the golgi apparatus membrane. Its function is as follows. Required for the post-translational delivery of tail-anchored (TA) proteins to the endoplasmic reticulum. Together with GET1, acts as a membrane receptor for soluble GET3, which recognizes and selectively binds the transmembrane domain of TA proteins in the cytosol. The GET complex cooperates with the HDEL receptor ERD2 to mediate the ATP-dependent retrieval of resident ER proteins that contain a C-terminal H-D-E-L retention signal from the Golgi to the ER. In Lachancea thermotolerans (strain ATCC 56472 / CBS 6340 / NRRL Y-8284) (Yeast), this protein is Golgi to ER traffic protein 2.